Here is a 330-residue protein sequence, read N- to C-terminus: Beta-ketoacyl-[acyl-carrier-protein] synthase III (330 aa).

Residues C115 and H255 contribute to the active site. The tract at residues 256-260 (QANFR) is ACP-binding. Residue N285 is part of the active site.

It belongs to the thiolase-like superfamily. FabH family. As to quaternary structure, homodimer.

Its subcellular location is the cytoplasm. The catalysed reaction is malonyl-[ACP] + acetyl-CoA + H(+) = 3-oxobutanoyl-[ACP] + CO2 + CoA. Its pathway is lipid metabolism; fatty acid biosynthesis. Its function is as follows. Catalyzes the condensation reaction of fatty acid synthesis by the addition to an acyl acceptor of two carbons from malonyl-ACP. Catalyzes the first condensation reaction which initiates fatty acid synthesis and may therefore play a role in governing the total rate of fatty acid production. Possesses both acetoacetyl-ACP synthase and acetyl transacylase activities. Its substrate specificity determines the biosynthesis of branched-chain and/or straight-chain of fatty acids. In Helicobacter pylori (strain P12), this protein is Beta-ketoacyl-[acyl-carrier-protein] synthase III.